We begin with the raw amino-acid sequence, 178 residues long: Fatty-acid and retinol-binding protein 1 (178 aa).

Positions 1 to 16 are cleaved as a signal peptide; sequence MYHRLILLALVGTTMA. Coiled coils occupy residues 67–89 and 130–153; these read DAAL…ELRN and KQAA…ELKV.

The protein belongs to the fatty-acid and retinol-binding protein (FARBP) family. Post-translationally, not glycosylated.

It is found in the secreted. Its function is as follows. Binds retinol. Also binds the fluorescent fatty acid 11-((5-dimethylaminonaphthalene-1-sulfonyl)amino)undecanoic acid (DAUDA). The long chain fatty acid oleic acid can act competitively to displace bound DAUDA and retinol. The polypeptide is Fatty-acid and retinol-binding protein 1 (Brugia malayi (Filarial nematode worm)).